The chain runs to 241 residues: Pyridoxal phosphate phosphatase PHOSPHO2 (241 aa).

D8 serves as the catalytic Nucleophile. Mg(2+)-binding residues include D8 and D10. D10 functions as the Proton donor in the catalytic mechanism. Substrate-binding residues include D19 and D99. D179 is a binding site for Mg(2+).

This sequence belongs to the HAD-like hydrolase superfamily. PHOSPHO family. Mg(2+) is required as a cofactor.

The catalysed reaction is pyridoxal 5'-phosphate + H2O = pyridoxal + phosphate. Phosphatase that has high activity toward pyridoxal 5'-phosphate (PLP). Also active at much lower level toward pyrophosphate, phosphoethanolamine (PEA), phosphocholine (PCho), phospho-l-tyrosine, fructose-6-phosphate, p-nitrophenyl phosphate, and h-glycerophosphate. This is Pyridoxal phosphate phosphatase PHOSPHO2 (PHOSPHO2) from Bos taurus (Bovine).